A 1498-amino-acid polypeptide reads, in one-letter code: Mitogen-activated protein kinase kinase kinase nsy-1 (1498 aa).

Disordered stretches follow at residues methionine 1–tyrosine 35 and leucine 190–threonine 209. The segment covering leucine 22–threonine 33 has biased composition (pro residues). Residues serine 664 to isoleucine 925 form the Protein kinase domain. Residues leucine 670–valine 678 and lysine 693 each bind ATP. Aspartate 790 acts as the Proton acceptor in catalysis. Positions isoleucine 1022–proline 1050 are disordered. Low complexity predominate over residues serine 1031–serine 1042. The stretch at serine 1276–lysine 1314 forms a coiled coil. Residues glutamine 1461–asparagine 1498 form a disordered region. Residues arginine 1469–histidine 1479 are compositionally biased toward basic and acidic residues.

The protein belongs to the protein kinase superfamily. STE Ser/Thr protein kinase family. MAP kinase kinase kinase subfamily. As to quaternary structure, interacts with unc-43. Interacts with sek-1. Requires Mg(2+) as cofactor. May be phosphorylated upon pathogenic bacterial infection. May be regulated by proteasomal degradation mediated by the E3-ubiquitin ligase rle-1. Expressed in intestine, hypodermis, rectal gland cell and neurons including sensory AWC neurons.

The protein resides in the cell projection. It is found in the axon. It localises to the perikaryon. It carries out the reaction L-seryl-[protein] + ATP = O-phospho-L-seryl-[protein] + ADP + H(+). The enzyme catalyses L-threonyl-[protein] + ATP = O-phospho-L-threonyl-[protein] + ADP + H(+). Serine/threonine-protein kinase which, by phosphorylating and activating sek-1, plays an important role in the activation of the p38 pathway also composed of the downstream effectors sek-1 and pmk-1. Downstream of CaMKII unc-43 and adapter protein tir-1, plays a role in determining asymmetric cell fates in olfactory AWC neurons during neuronal development. Activation results in the repression of odorant receptor str-2 expression in one of the 2 AWC neurons. Involved in resistance to pathogenic Gram-positive and Gram-negative bacterial and fungal infection. Involved in resistance to the nematotoxic C.cinerea galectin Cgl2. Probably by activating the sek1/pmk-1/skn-1 pathway, involved in the up-regulation of gcs-1 and glutathione-S-transferase gst-4 expression upon bacterial infection. Probably downstream of tir-1 and nipi-3, required for the expression of antimicrobial peptide nlp-29 in the epidermis in response to fungal infection or physical injury. Plays a role in resistance to several environmental stresses including oxidative, protein misfolding (ER) and osmotic stresses, and DNA-damaging reagents. Plays a role in the stabilization of transcription factor rnt-1 in the intestine during oxidative stress. Involved in germline apoptosis induced by heavy metals, such as Cu(2+). In addition, plays a role in the up-regulation of gcs-1 upon arsenite treatment, most likely through activation of pmk-1, to confer protection against toxicity induced by heavy metals. Plays a role downstream of tir-1 in regulating susceptibility to anoxia. Involved in egg laying. The polypeptide is Mitogen-activated protein kinase kinase kinase nsy-1 (Caenorhabditis elegans).